Reading from the N-terminus, the 283-residue chain is MMRILLFLATNMAVMLVLGIILNVTGIAGNSTGGILIMALLFGFAGSLISLFLSKTMALRSVDGEVITQPRNQTERWLIDTVSRQAQKAGIPMPDVAIYHSPDVNAFATGATKSNSLVAVSTGLLNNMTEAEAEAVLAHEISHISNGDMVTMALLQGVLNTFVIFLSRVIATAVASSRNNNGEETRSSGIYFLVSMVLEMLFGVLASIIAMWFSRYREFRADAGSASLVGKEKMIMALQRLQQLHEPQNLEGSLNAFMINGKRSELFMSHPPLEKRIEALRNL.

The next 2 helical transmembrane spans lie at 4-24 (ILLF…ILNV) and 33-53 (GGIL…SLFL). Position 139 (histidine 139) interacts with Zn(2+). Glutamate 140 is an active-site residue. Residue histidine 143 coordinates Zn(2+). 2 helical membrane passes run 147 to 167 (GDMV…IFLS) and 190 to 210 (IYFL…SIIA). Position 218 (glutamate 218) interacts with Zn(2+).

This sequence belongs to the peptidase M48B family. Requires Zn(2+) as cofactor.

Its subcellular location is the cell inner membrane. In Haemophilus influenzae (strain 86-028NP), this protein is Protease HtpX.